Reading from the N-terminus, the 362-residue chain is Probable dual-specificity RNA methyltransferase RlmN (362 aa).

Residue E91 is the Proton acceptor of the active site. Positions 97-329 constitute a Radical SAM core domain; the sequence is QHYGLSVCVT…KKNGVNCVVR (233 aa). C104 and C340 form a disulfide bridge. [4Fe-4S] cluster contacts are provided by C111, C115, and C118. S-adenosyl-L-methionine-binding positions include 163 to 164, S195, 218 to 220, and N296; these read GE and SLH. C340 acts as the S-methylcysteine intermediate in catalysis.

It belongs to the radical SAM superfamily. RlmN family. Requires [4Fe-4S] cluster as cofactor.

It localises to the cytoplasm. The enzyme catalyses adenosine(2503) in 23S rRNA + 2 reduced [2Fe-2S]-[ferredoxin] + 2 S-adenosyl-L-methionine = 2-methyladenosine(2503) in 23S rRNA + 5'-deoxyadenosine + L-methionine + 2 oxidized [2Fe-2S]-[ferredoxin] + S-adenosyl-L-homocysteine. The catalysed reaction is adenosine(37) in tRNA + 2 reduced [2Fe-2S]-[ferredoxin] + 2 S-adenosyl-L-methionine = 2-methyladenosine(37) in tRNA + 5'-deoxyadenosine + L-methionine + 2 oxidized [2Fe-2S]-[ferredoxin] + S-adenosyl-L-homocysteine. Its function is as follows. Specifically methylates position 2 of adenine 2503 in 23S rRNA and position 2 of adenine 37 in tRNAs. The chain is Probable dual-specificity RNA methyltransferase RlmN from Streptococcus sanguinis (strain SK36).